A 652-amino-acid chain; its full sequence is Sciellin (652 aa).

Positions 1-10 (MSNFSSRKKS) are enriched in basic residues. 2 disordered regions span residues 1–29 (MSNF…QQGF) and 43–180 (SWIK…KPLG). Over residues 66 to 95 (NSHDALDRKLIERDEPKATISRYRSEDMLD) the composition is skewed to basic and acidic residues. Lysine 82 is modified (N6-acetyllysine). Residues 97–110 (TLSSFRTPQSTKTP) show a composition bias toward polar residues. Positions 111–130 (AVSSFNANTTATASTPATTP) are enriched in low complexity. Pro residues predominate over residues 161-170 (LHPPLPPKPC). 15 consecutive repeat copies span residues 207–226 (TEDL…TDKG), 227–241 (EELD…SLNR), 242–261 (NQGL…LDKR), 262–281 (AQSL…DGKG), 282–301 (NQAF…DRRS), 302–320 (QDLR…IGRR), 321–340 (KQDL…NMKR), 341–360 (GKSL…SNKG), 361–380 (GPSL…ANQR), 381–398 (DQDL…NRSS), 399–418 (QHSL…TTAR), 419–438 (HQDL…NNQR), 439–458 (NHDV…CEQS), 459–477 (EELD…NTNG), and 478–496 (GQDL…EKNG). The 15 X approximate tandem repeats stretch occupies residues 207–496 (TEDLDDIIRV…VNSHVAEKNG (290 aa)). Serine 264 is subject to Phosphoserine. Phosphoserine is present on serine 343. The interval 353–385 (EVNRSNKGGPSLDNFTKGVPARSRANQRDQDLD) is disordered. Residues 436–455 (NQRNHDVDSTIRGNPTGTRC) are disordered. The segment covering 446–455 (IRGNPTGTRC) has biased composition (polar residues). In terms of domain architecture, LIM zinc-binding spans 583 to 649 (DMCTYCRKPL…EPCYSKVMAK (67 aa)).

In terms of tissue distribution, expressed in the upper layers of stratified epithelia, including, ependyma and choroid plexus of the brain ventricles.

It is found in the cytoplasm. Its subcellular location is the membrane. Its function is as follows. May function in the assembly or regulation of proteins in the cornified envelope. The LIM domain may be involved in homotypic or heterotypic associations and may function to localize sciellin to the cornified envelope. This is Sciellin (Scel) from Mus musculus (Mouse).